The sequence spans 276 residues: Formamidopyrimidine-DNA glycosylase (276 aa).

Proline 2 (schiff-base intermediate with DNA) is an active-site residue. The active-site Proton donor is the glutamate 3. Lysine 60 (proton donor; for beta-elimination activity) is an active-site residue. Residues histidine 93 and arginine 112 each coordinate DNA. The segment at 240–274 (HVYGRKQQPCHHCDTAIEKTVVGGRGTHYCPNCQP) adopts an FPG-type zinc-finger fold. The active-site Proton donor; for delta-elimination activity is arginine 264.

Belongs to the FPG family. In terms of assembly, monomer. Zn(2+) is required as a cofactor.

The catalysed reaction is Hydrolysis of DNA containing ring-opened 7-methylguanine residues, releasing 2,6-diamino-4-hydroxy-5-(N-methyl)formamidopyrimidine.. It catalyses the reaction 2'-deoxyribonucleotide-(2'-deoxyribose 5'-phosphate)-2'-deoxyribonucleotide-DNA = a 3'-end 2'-deoxyribonucleotide-(2,3-dehydro-2,3-deoxyribose 5'-phosphate)-DNA + a 5'-end 5'-phospho-2'-deoxyribonucleoside-DNA + H(+). Functionally, involved in base excision repair of DNA damaged by oxidation or by mutagenic agents. Acts as a DNA glycosylase that recognizes and removes damaged bases. Has a preference for oxidized purines, such as 7,8-dihydro-8-oxoguanine (8-oxoG). Has AP (apurinic/apyrimidinic) lyase activity and introduces nicks in the DNA strand. Cleaves the DNA backbone by beta-delta elimination to generate a single-strand break at the site of the removed base with both 3'- and 5'-phosphates. The sequence is that of Formamidopyrimidine-DNA glycosylase from Shouchella clausii (strain KSM-K16) (Alkalihalobacillus clausii).